Reading from the N-terminus, the 445-residue chain is Glucose-6-phosphate isomerase 2 (445 aa).

Glu285 (proton donor) is an active-site residue. Catalysis depends on residues His306 and Lys420.

Belongs to the GPI family. Homodimer.

Its subcellular location is the cytoplasm. It carries out the reaction alpha-D-glucose 6-phosphate = beta-D-fructose 6-phosphate. It participates in carbohydrate biosynthesis; gluconeogenesis. It functions in the pathway carbohydrate degradation; glycolysis; D-glyceraldehyde 3-phosphate and glycerone phosphate from D-glucose: step 2/4. Functionally, catalyzes the reversible isomerization of glucose-6-phosphate to fructose-6-phosphate. The chain is Glucose-6-phosphate isomerase 2 from Geobacillus stearothermophilus (Bacillus stearothermophilus).